The sequence spans 1367 residues: Flocculation protein FLO11 (1367 aa).

The N-terminal stretch at 1–21 is a signal peptide; the sequence is MQRPFLLAYLVLSLLFNSALG. One can recognise a Flo11 domain in the interval 31–207; it reads SSEGTSCNSI…NIDCDNNCGG (177 aa). 3 cysteine pairs are disulfide-bonded: Cys37–Cys201, Cys44–Cys179, and Cys141–Cys205. The span at 209–267 shows a compositional bias: low complexity; it reads KSSTTTSSTSESSTTTSSTSESSTTTSSTSESSTTTSSTSESSTSSSTTAPATPTTTSC. Disordered regions lie at residues 209–975 and 1008–1032; these read KSST…TTSV and TTTVPCSTSPSETASESTTTSPTTP. Repeat copies occupy residues 210 to 219, 220 to 229, 230 to 239, 240 to 249, 262 to 274, 275 to 287, 313 to 327, 328 to 342, 343 to 354, 355 to 369, 370 to 381, 382 to 393, 394 to 408, 409 to 420, 421 to 432, 433 to 444, 445 to 456, 457 to 471, 472 to 483, 484 to 498, 499 to 510, 511 to 525, 526 to 540, 541 to 552, 568 to 579, 580 to 594, 595 to 609, 610 to 624, 625 to 636, 637 to 651, 652 to 666, 667 to 681, 682 to 693, 694 to 705, 706 to 720, 721 to 735, 736 to 750, 751 to 762, 763 to 777, 778 to 792, 808 to 822, 838 to 852, 865 to 879, 937 to 968, and 981 to 1012. Residues 210 to 249 are 4 X 10 AA repeats, Ser/Thr-rich; the sequence is SSTTTSSTSESSTTTSSTSESSTTTSSTSESSTTTSSTSE. The 2 X 13 AA repeats, Thr-rich stretch occupies residues 262-287; sequence PTTTSCTKEKPTPPTTTSCTKEKPTP. Residues 281–292 are compositionally biased toward basic and acidic residues; sequence TKEKPTPPHHDT. Composition is skewed to low complexity over residues 302-900 and 910-948; these read TSKT…TVTP and TETSVSSTTETTIVPTKTTTSVTTPSTTTITTTVCSTGT. A 22 X 15 AA approximate repeats, Ser-rich region spans residues 313–852; the sequence is PVPTPSSSTT…SSSTTESSSA (540 aa). Positions 343–762 are 15 X 12 AA repeats, Ser/Thr-rich; the sequence is PVTSSTTESS…TSSTTESSSA (420 aa). A glycan (N-linked (GlcNAc...) asparagine) is linked at Asn817. An N-linked (GlcNAc...) asparagine glycan is attached at Asn874. The segment at 937 to 1119 is 3 X 32 AA tandem repeats, Thr-rich; the sequence is TTITTTVCST…SPKTVTTTVP (183 aa). A compositionally biased stretch (polar residues) spans 949 to 961; the sequence is NSAGETTSGCSPK. The segment covering 962-975 has biased composition (low complexity); it reads TVTTTVPTTTTTSV. Positions 1014–1032 are enriched in low complexity; sequence STSPSETASESTTTSPTTP. A 5-3 repeat occupies 1088–1119; sequence TTITTTVCSTGTNSAGETTSGCSPKTVTTTVP. Residue Gly1346 is the site of GPI-anchor amidated glycine attachment. Residues 1347-1367 constitute a propeptide, removed in mature form; sequence AANIKVLGNFMWLLLALPVVF.

Belongs to the flocculin family. Highly divergent. Post-translationally, extensively O-mannosylated. In terms of processing, the GPI-anchor is attached to the protein in the endoplasmic reticulum and serves to target the protein to the cell surface. There, the glucosamine-inositol phospholipid moiety is cleaved off and the GPI-modified mannoprotein is covalently attached via its lipidless GPI glycan remnant to the 1,6-beta-glucan of the outer cell wall layer. A soluble form is probably produced by proteolytic cleavage at the cell surface (shedding).

The protein resides in the secreted. It localises to the cell wall. It is found in the membrane. Its function is as follows. Homophilic binding protein that enables kin discrimination in heterogeneous yeast populations by mediating homotypic cell-cell interactions during flocculation, a reversible and asexual process in which cells adhere to form aggregates (flocs). Plays a role in cell-substrate adhesion, haploid invasive growth, diploid pseudohyphae formation and biofilm (flor) development. Adhesive activity is inhibited by mannose, but not by glucose, maltose, sucrose or galactose. This Saccharomyces cerevisiae (strain ATCC 204508 / S288c) (Baker's yeast) protein is Flocculation protein FLO11.